A 108-amino-acid polypeptide reads, in one-letter code: Large ribosomal subunit protein uL22 (108 aa).

This sequence belongs to the universal ribosomal protein uL22 family. In terms of assembly, part of the 50S ribosomal subunit.

In terms of biological role, this protein binds specifically to 23S rRNA; its binding is stimulated by other ribosomal proteins, e.g. L4, L17, and L20. It is important during the early stages of 50S assembly. It makes multiple contacts with different domains of the 23S rRNA in the assembled 50S subunit and ribosome. Functionally, the globular domain of the protein is located near the polypeptide exit tunnel on the outside of the subunit, while an extended beta-hairpin is found that lines the wall of the exit tunnel in the center of the 70S ribosome. This chain is Large ribosomal subunit protein uL22, found in Desulfatibacillum aliphaticivorans.